Reading from the N-terminus, the 326-residue chain is UDP-3-O-acylglucosamine N-acyltransferase (326 aa).

Catalysis depends on H225, which acts as the Proton acceptor.

Belongs to the transferase hexapeptide repeat family. LpxD subfamily. As to quaternary structure, homotrimer.

The catalysed reaction is a UDP-3-O-[(3R)-3-hydroxyacyl]-alpha-D-glucosamine + a (3R)-hydroxyacyl-[ACP] = a UDP-2-N,3-O-bis[(3R)-3-hydroxyacyl]-alpha-D-glucosamine + holo-[ACP] + H(+). It participates in bacterial outer membrane biogenesis; LPS lipid A biosynthesis. Its function is as follows. Catalyzes the N-acylation of UDP-3-O-acylglucosamine using 3-hydroxyacyl-ACP as the acyl donor. Is involved in the biosynthesis of lipid A, a phosphorylated glycolipid that anchors the lipopolysaccharide to the outer membrane of the cell. This Verminephrobacter eiseniae (strain EF01-2) protein is UDP-3-O-acylglucosamine N-acyltransferase.